The primary structure comprises 347 residues: Guanine nucleotide-binding protein alpha-5 subunit (347 aa).

Gly2 is lipidated: N-myristoyl glycine. Cys3 carries S-palmitoyl cysteine lipidation. Positions 27 to 347 constitute a G-alpha domain; the sequence is NETKLLLLGP…KNIFNTIINY (321 aa). A G1 motif region spans residues 30 to 43; it reads KLLLLGPGESGKST. Residues 35–42, 170–176, 195–199, 264–267, and Ala319 each bind GTP; these read GPGESGKS, LRSRVRT, DVGGQ, and NKVD. Ser42 and Thr176 together coordinate Mg(2+). The G2 motif stretch occupies residues 168-176; sequence DVLRSRVRT. The tract at residues 191–200 is G3 motif; the sequence is FRMLDVGGQR. The segment at 260–267 is G4 motif; that stretch reads IIFFNKVD. The tract at residues 317 to 322 is G5 motif; the sequence is TCAIDT.

The protein belongs to the G-alpha family. G(q) subfamily. In terms of assembly, g proteins are composed of 3 units; alpha, beta and gamma. The alpha chain contains the guanine nucleotide binding site.

Guanine nucleotide-binding proteins (G proteins) are involved as modulators or transducers in various transmembrane signaling systems. This chain is Guanine nucleotide-binding protein alpha-5 subunit (gpaE), found in Dictyostelium discoideum (Social amoeba).